Consider the following 1024-residue polypeptide: Nardilysin-like (1024 aa).

The disordered stretch occupies residues 41-103 (PDIYPEGSVP…DEVKGKGDHQ (63 aa)). Over residues 52–95 (QIDEDDEDGEEEDSDGSSEDDDDDEDDEEDGEGDEEDEDEDEDE) the composition is skewed to acidic residues. Histidine 129 contacts Zn(2+). The active-site Proton acceptor is glutamate 132. A Zn(2+)-binding site is contributed by histidine 133. Residue glutamate 203 is part of the active site. Glutamate 210 provides a ligand contact to Zn(2+).

It belongs to the peptidase M16 family. It depends on Zn(2+) as a cofactor.

It catalyses the reaction Hydrolysis of polypeptides, preferably at -Xaa-|-Arg-Lys-, and less commonly at -Arg-|-Arg-Xaa-, in which Xaa is not Arg or Lys.. Functionally, cleaves peptide substrates on the N-terminus of arginine residues in dibasic pairs. This is Nardilysin-like from Arabidopsis thaliana (Mouse-ear cress).